A 626-amino-acid polypeptide reads, in one-letter code: PEX5-related protein (626 aa).

3 disordered regions span residues 1-20 (MYQG…LSSD), 118-167 (VSQT…SSLD), and 181-235 (KFHG…ASEL). Residues 181–198 (KFHGDRNTKGHPMAERKS) are compositionally biased toward basic and acidic residues. Position 205 is a phosphoserine (Ser205). Residues 225 to 235 (SALNSESASEL) are compositionally biased toward low complexity. Residues Ser253, Ser257, and Ser261 each carry the phosphoserine modification. 3 TPR repeats span residues 326–359 (WPGA…DPGD), 360–393 (AEAW…QPNN), and 395–427 (KALM…NPKY). A phosphoserine mark is found at Ser445 and Ser447. 3 TPR repeats span residues 474 to 507 (PDLQ…RPED), 509 to 541 (SLWN…QPGF), and 543 to 575 (RSRY…QRKS).

The protein belongs to the peroxisomal targeting signal receptor family. Interacts with RAB8B. Forms an obligate 4:4 complex with HCN2. May interact with the C-terminal PTS1-type tripeptide peroxisomal targeting signal (SKL-type); the relevance of such interaction is however unclear. Interacts with HCN3. Interacts with HCN4 with a 4:4 HCN4:PEX5L stoichiometry; reduces the effects of cAMP on the voltage-dependence and rate of activation of HCN4. In terms of tissue distribution, mainly expressed in brain. Also expressed in pancreas, testis and pituitary.

Its subcellular location is the cytoplasm. It localises to the membrane. In terms of biological role, accessory subunit of hyperpolarization-activated cyclic nucleotide-gated (HCN) channels, regulating their cell-surface expression and cyclic nucleotide dependence. The sequence is that of PEX5-related protein (PEX5L) from Homo sapiens (Human).